The following is a 620-amino-acid chain: MIEERDLVLSNGIHCIADIHSELYARLKKESQAVTPWVYQKQYGKFVTYFVAVIIFLSLIKKLAFMYYDSSEEFLPEKKNSPTTPSVFLARIMTKLVAFNRYICYRKFPTLIFSYLGIPTSVGTFLVVMATTLYTLLYCFVPHPFYRPCAGFGSPPLSVRAGIMAISLVSFVFSLSGKINVIGWLVGLSYEKINIYHQWASILCLFFSWVHVIPFLRQARHEGGYERMHQRWKASDMWRSGVPPILFLNLLWLSSLPIARRHFYEIFLQLHWILAVGFYISLFYHVYPELNSHMYLVATIVVWFAQLFYRLAVKGYLRPGRSFMASTIANVSIVGEGCVELIVKDVDMAYSPGQHIFVRTIDKDIISNHPFSIFPSAKYPGGIKMLIRAQKGFSKRLYESNDDMKKILIDGPYGGIERDIRSFTNVYLICSGSGISTCLPFLQKYGPILHKTNLEVITLDWVVRHREDISWIRDEICTLSNNLRQLFLDGTIVVRIYVCSDSTVPGIIKTFPQTADTASDQSDLAKREKDTEFGQDDTESNSTFDKSNNEYKGLITIIPSKPDLNQVINDYQIGFRNCFICSGSDSLRYTVGNSVAGLQAKVFSNKNVEECYLHSESFGY.

Residues 1–45 (MIEERDLVLSNGIHCIADIHSELYARLKKESQAVTPWVYQKQYGK) are Extracellular-facing. The chain crosses the membrane as a helical span at residues 46–66 (FVTYFVAVIIFLSLIKKLAFM). The Cytoplasmic portion of the chain corresponds to 67 to 107 (YYDSSEEFLPEKKNSPTTPSVFLARIMTKLVAFNRYICYRK). The chain crosses the membrane as a helical span at residues 108–128 (FPTLIFSYLGIPTSVGTFLVV). Residues 129–167 (MATTLYTLLYCFVPHPFYRPCAGFGSPPLSVRAGIMAIS) lie on the Extracellular side of the membrane. Residues 161-320 (AGIMAISLVS…LAVKGYLRPG (160 aa)) form the Ferric oxidoreductase domain. A helical membrane pass occupies residues 168 to 188 (LVSFVFSLSGKINVIGWLVGL). Residues 189 to 194 (SYEKIN) lie on the Cytoplasmic side of the membrane. Residues 195–215 (IYHQWASILCLFFSWVHVIPF) traverse the membrane as a helical segment. Heme contacts are provided by His197 and His211. The Extracellular segment spans residues 216-237 (LRQARHEGGYERMHQRWKASDM). The chain crosses the membrane as a helical span at residues 238–258 (WRSGVPPILFLNLLWLSSLPI). Topologically, residues 259 to 265 (ARRHFYE) are cytoplasmic. A helical membrane pass occupies residues 266-286 (IFLQLHWILAVGFYISLFYHV). Heme is bound by residues His271 and His285. Residues 287 to 292 (YPELNS) lie on the Extracellular side of the membrane. A helical transmembrane segment spans residues 293 to 313 (HMYLVATIVVWFAQLFYRLAV). Residues 314–620 (KGYLRPGRSF…CYLHSESFGY (307 aa)) are Cytoplasmic-facing. One can recognise an FAD-binding FR-type domain in the interval 321-419 (RSFMASTIAN…DGPYGGIERD (99 aa)). An FAD-binding site is contributed by 369 to 375 (HPFSIFP). Positions 519-544 (SDQSDLAKREKDTEFGQDDTESNSTF) are disordered. Residues 523–532 (DLAKREKDTE) show a composition bias toward basic and acidic residues.

Belongs to the ferric reductase (FRE) family. FAD serves as cofactor.

The protein localises to the cell membrane. It catalyses the reaction 2 a Fe(II)-siderophore + NADP(+) + H(+) = 2 a Fe(III)-siderophore + NADPH. Cell surface metalloreductase. May be involved in copper homeostasis. This is Ferric/cupric reductase transmembrane component 7 (FRE7) from Saccharomyces cerevisiae (strain YJM789) (Baker's yeast).